Here is a 265-residue protein sequence, read N- to C-terminus: Small ribosomal subunit protein uS5 (265 aa).

Low complexity predominate over residues Met1–Ala15. The segment at Met1–Glu44 is disordered. Residues Arg26–Gly35 are compositionally biased toward basic residues. One can recognise an S5 DRBM domain in the interval Leu88–Val151. The interval Thr245–Ala265 is disordered. Residues Glu246–Leu258 are compositionally biased toward basic and acidic residues.

It belongs to the universal ribosomal protein uS5 family.

In terms of biological role, component of the ribosome, a large ribonucleoprotein complex responsible for the synthesis of proteins in the cell. The small ribosomal subunit (SSU) binds messenger RNAs (mRNAs) and translates the encoded message by selecting cognate aminoacyl-transfer RNA (tRNA) molecules. The large subunit (LSU) contains the ribosomal catalytic site termed the peptidyl transferase center (PTC), which catalyzes the formation of peptide bonds, thereby polymerizing the amino acids delivered by tRNAs into a polypeptide chain. The nascent polypeptides leave the ribosome through a tunnel in the LSU and interact with protein factors that function in enzymatic processing, targeting, and the membrane insertion of nascent chains at the exit of the ribosomal tunnel. Plays a role in the assembly and function of the 40S ribosomal subunit. Mutations in this protein affects the control of translational fidelity. Involved in nucleolar processing of pre-18S ribosomal RNA and ribosome assembly. This chain is Small ribosomal subunit protein uS5, found in Leishmania amazonensis.